The following is a 379-amino-acid chain: Chaperone protein DnaJ (379 aa).

The 66-residue stretch at 7 to 72 (CYYETLEVER…DKRAAYDRYG (66 aa)) folds into the J domain. The segment at 135–213 (GKTAQIEIPV…CTGSGRVTKE (79 aa)) adopts a CR-type zinc-finger fold. Zn(2+) contacts are provided by cysteine 148, cysteine 151, cysteine 165, cysteine 168, cysteine 187, cysteine 190, cysteine 201, and cysteine 204. CXXCXGXG motif repeat units lie at residues 148 to 155 (CESCSGTG), 165 to 172 (CSTCGGAG), 187 to 194 (CPSCQGRG), and 201 to 208 (CPSCTGSG).

The protein belongs to the DnaJ family. In terms of assembly, homodimer. It depends on Zn(2+) as a cofactor.

Its subcellular location is the cytoplasm. In terms of biological role, participates actively in the response to hyperosmotic and heat shock by preventing the aggregation of stress-denatured proteins and by disaggregating proteins, also in an autonomous, DnaK-independent fashion. Unfolded proteins bind initially to DnaJ; upon interaction with the DnaJ-bound protein, DnaK hydrolyzes its bound ATP, resulting in the formation of a stable complex. GrpE releases ADP from DnaK; ATP binding to DnaK triggers the release of the substrate protein, thus completing the reaction cycle. Several rounds of ATP-dependent interactions between DnaJ, DnaK and GrpE are required for fully efficient folding. Also involved, together with DnaK and GrpE, in the DNA replication of plasmids through activation of initiation proteins. In Rhodopseudomonas palustris (strain HaA2), this protein is Chaperone protein DnaJ.